The sequence spans 317 residues: Methionyl-tRNA formyltransferase (317 aa).

112 to 115 (SLLP) contacts (6S)-5,6,7,8-tetrahydrofolate.

It belongs to the Fmt family.

The enzyme catalyses L-methionyl-tRNA(fMet) + (6R)-10-formyltetrahydrofolate = N-formyl-L-methionyl-tRNA(fMet) + (6S)-5,6,7,8-tetrahydrofolate + H(+). In terms of biological role, attaches a formyl group to the free amino group of methionyl-tRNA(fMet). The formyl group appears to play a dual role in the initiator identity of N-formylmethionyl-tRNA by promoting its recognition by IF2 and preventing the misappropriation of this tRNA by the elongation apparatus. The protein is Methionyl-tRNA formyltransferase of Mycoplasma capricolum subsp. capricolum (strain California kid / ATCC 27343 / NCTC 10154).